The chain runs to 494 residues: Protein transport protein Sec61 subunit alpha (494 aa).

10 helical membrane-spanning segments follow: residues 36–56, 79–99, 122–142, 147–167, 177–197, 249–269, 294–314, 359–379, 426–446, and 450–470; these read LWTS…LYGI, LMEL…LLAG, LLGI…GMYG, LGAG…IIVI, YGIG…SIVW, LLAT…QVEL, MPII…QILY, IVSD…SCAL, AAFG…MGAI, and TGIL…LLAV.

Belongs to the SecY/SEC61-alpha family. In terms of assembly, heterotrimeric complex composed of SEC61-alpha, SEC61-beta and SEC61-gamma.

It is found in the endoplasmic reticulum membrane. Its function is as follows. Appears to play a crucial role in the insertion of secretory and membrane polypeptides into the ER. It is required for assembly of membrane and secretory proteins. The protein is Protein transport protein Sec61 subunit alpha of Pyrenomonas salina.